A 519-amino-acid polypeptide reads, in one-letter code: Exodeoxyribonuclease 7 large subunit (519 aa).

The interval 500–519 is disordered; sequence VGRGKTRKPKEEPPAQGSLL.

Belongs to the XseA family. Heterooligomer composed of large and small subunits.

The protein localises to the cytoplasm. It catalyses the reaction Exonucleolytic cleavage in either 5'- to 3'- or 3'- to 5'-direction to yield nucleoside 5'-phosphates.. Functionally, bidirectionally degrades single-stranded DNA into large acid-insoluble oligonucleotides, which are then degraded further into small acid-soluble oligonucleotides. This Cereibacter sphaeroides (strain ATCC 17029 / ATH 2.4.9) (Rhodobacter sphaeroides) protein is Exodeoxyribonuclease 7 large subunit.